We begin with the raw amino-acid sequence, 372 residues long: N-methyl-L-tryptophan oxidase (372 aa).

Position 4–34 (4–34) interacts with FAD; that stretch reads DLIIIGSGSVGAAAGYYATRAGLKVLMTDAH. At C307 the chain carries S-8alpha-FAD cysteine.

It belongs to the MSOX/MTOX family. MTOX subfamily. As to quaternary structure, monomer. Requires FAD as cofactor.

It carries out the reaction N(alpha)-methyl-L-tryptophan + O2 + H2O = L-tryptophan + formaldehyde + H2O2. Its function is as follows. Catalyzes the oxidative demethylation of N-methyl-L-tryptophan. The protein is N-methyl-L-tryptophan oxidase of Salmonella agona (strain SL483).